Consider the following 156-residue polypeptide: Ribosomal RNA large subunit methyltransferase H (156 aa).

S-adenosyl-L-methionine is bound by residues leucine 73, glycine 104, and 123–128 (VSSLTL).

The protein belongs to the RNA methyltransferase RlmH family. Homodimer.

Its subcellular location is the cytoplasm. The enzyme catalyses pseudouridine(1915) in 23S rRNA + S-adenosyl-L-methionine = N(3)-methylpseudouridine(1915) in 23S rRNA + S-adenosyl-L-homocysteine + H(+). Specifically methylates the pseudouridine at position 1915 (m3Psi1915) in 23S rRNA. In Paraburkholderia phytofirmans (strain DSM 17436 / LMG 22146 / PsJN) (Burkholderia phytofirmans), this protein is Ribosomal RNA large subunit methyltransferase H.